Reading from the N-terminus, the 65-residue chain is Omega-lycotoxin-Am1f (65 aa).

A propeptide spanning residues 1–18 is cleaved from the precursor; sequence GDEEDEVEETLPVAEEGR. 4 cysteine pairs are disulfide-bonded: cysteine 22/cysteine 37, cysteine 29/cysteine 42, cysteine 36/cysteine 62, and cysteine 44/cysteine 60.

Belongs to the neurotoxin omega-lctx family. Expressed by the venom gland.

It is found in the secreted. Functionally, modulates Cav2.1/CACNA1A voltage-gated calcium channels (P/Q-type currents) in rat cerebellar Purkinje cells and hippocampal CA1-CA3 neurons. At saturating concentrations (&gt;10 nM) decelerates activation kinetics and slightly increases peak amplitude without affecting deactivation kinetics. In vivo, does not cause death when intravenously injected into mice. In rat models, through its activity on Cav2.1/CACNA1A, has an ameliorative effect on memory defects provoked by hyperstimulation of N-methyl-D-aspartate receptors (NMDARs) in the hippocampus. This Alopecosa marikovskyi (Wolf spider) protein is Omega-lycotoxin-Am1f.